Consider the following 178-residue polypeptide: Ribosome maturation factor RimM (178 aa).

Positions 98–178 (DGEYYWNQLE…RILVDWDPEF (81 aa)) constitute a PRC barrel domain.

The protein belongs to the RimM family. In terms of assembly, binds ribosomal protein uS19.

It localises to the cytoplasm. An accessory protein needed during the final step in the assembly of 30S ribosomal subunit, possibly for assembly of the head region. Essential for efficient processing of 16S rRNA. May be needed both before and after RbfA during the maturation of 16S rRNA. It has affinity for free ribosomal 30S subunits but not for 70S ribosomes. The chain is Ribosome maturation factor RimM from Cellvibrio japonicus (strain Ueda107) (Pseudomonas fluorescens subsp. cellulosa).